The following is a 4092-amino-acid chain: MCKNEARLANELIEFVAATVTGIKNSPKENEQAFIDYLHCQYLERFQFFLGLLDGREFDTLFVFLFEELDRTIVTIDIGEEAIYDANLANKKYSTLLIIKSRSVIVDAEPIATQISAIYLPGPVNAGNLASIITHGVSSVFGQLIKSDTKTYSVETIDKTRRKLDDISKQFQQLHTSIETPDLLAMVPSIIKLAVSKGATSHDYANYLPSNDLESMRFLNILQSIANKWFLVLKQTLAIDRDIKNGSFLDEVEFWSNFYEVLKSLIEQTQSQEFQVCLSVLTNAKRFHNLTNLLNEGSLSDKFKLADKYNQFLSSIPIDEVRQASNLEDLQELFPVLASSLKKFRYSGYPVQRFVVLMDKISQEVMDAILSNLSDLFQLEYGSFLGLYEKSAGMIEEWDDIVQDVNLLIREDLRKRAPQELLIQKLTFTSASVKATLDEILSTRKRFFSLAETIKSISPSTYHEEIQRLYHPFEQIHDISVNFRLKLEQAESEFSKNMLDLEKKLQNTLASFMDSDHCPTEKLSYLVKFKPLMELCPRIKVKVLENQQILLLEIKKDIRQLETGLELLPKILHVEALNNIPPISARISYFLNVQSRIDNIVQYLEALFGSNWNDTLEGRSISTSIVQLRKETNPHDVFLHWLGNFPEKATANLLTTPILKLIRNNEDDYELKVNFDFALAAAYSELRSLTYMAFQVPSHIVRIARTYMYLYPRAINLVELIQTFFSLSKSLSYTFYTNIFLKRNVQTVWLLLQQILITPWESLQEESSEMSCSVHSLARLEKSIDGILSDYQILKNSEPQFAKEFSGLKSFDGTADDLHEVEEIISNIQAIFENLFTKGLTNVSDHISTFNNLIISIILEKVRLNLKKMHFPKHVLKLSFNEGRITSSPSLAAMKRSLLKDIEALLNKVVLINFLHDPDHPLSTTLTFNSLVIKLKDDIQNCIEQVQNLHCKINSYVKEWQKMEFLWQITEEAFLEVVDNSTQRCFGILKGLLDSQSKFDLIISRNNFSKNLVLHTEDAQRHIRSKMDSWILYVSKHLLTIYERDARKLHEDMNRDREAVEDMDINFTSLKNITVIIEAVNVNKRHLTERDIQIKLLGSVMRALTKLKVRFPSHFVYIDQLDNDFSSLRQSLSYVEQELQKHRVVIAKSLEEGVENINNLSQSLNESWSVRKPISPTLTPPEALKILEFFNESITKLKKKMHSVAAAAKMLLIPVVLNDQLTHVVEEVKTYDLVWRSIKNLWEDVQRTFETPWCRVDVLLLQSDLANFLRRADELPRAVKQFEMYKSLFSQVNMLTSVNKILVELKDGALKPRHWNMIFRDIGKRQIQKNLLDKLEFSLKDVMVLNLTLNEILLTKIIERAQKEFVIEKSLNRIKKFWKEAQYEVIEHSSGLKLVREWDVLEQACKEDLEELVSMKASNYYKIFEQDCLDLESKLTKLSEIQVNWVEVQFYWLDLYGILGENLDIQNFLPLETSKFKSLTSEYKMITTRAFQLDTTIEVIHIPNFDTTLKLTIDSLKMIKSSLSTFLERQRRQFPRFYFLGNDDLLKIIGSGKHHDQVSKFMKKMFGSIESIIFLEDFITGVRSVEGEVLNLNEKIELKDSIQAQEWLNILDTEIKLSVFTQFRDCLGQLKDGTDIEVVVSKYIFQAILLSAQVMWTELVEKCLQTNQFSKYWKEVDMKIKGLLDKLNKSSDNVKKKIEALLVEYLHFNNVIGQLKNCSTKEEARLLWAKVQKFYQKNDTLDDLNSVFISQSGYLLQYKFEYIGIPERLIYTPLLLIGFATLTDSLHQKYGGCFFGPAGTGKTETVKAFGQNLGRVVVVFNCDDSFDYQVLSRLLVGITQIGAWGCFDEFNRLDEKVLSAVSANIQQIQNGLQVGKSHITLLEEETPLSPHTAVFITLNPGYNGRSELPENLKKSFREFSMKSPQSGTIAEMILQIMGFEDSKSLASKIVHFLELLSSKCSSMNHYHFGLRTLKGVLRNCSPLISEFGEGEKTVVESLKRVILPSLGDTDELVFKDELSKIFDSAGTPLNSKAIVQCLKDAGQRSGFSMSEEFLKKCMQFYYMQKTQQALILVGKAGCGKTATWKTVIDAMAIFDGHANVVYVIDTKVLTKESLYGSMLKATLEWRDGLFTSILRRVNDDITGTFKNSRIWVVFDSDLDPEYVEAMNSVLDDNKILTLPNGERLPIPPNFRILFETDNLDHTTPATITRCGLLWFSTDVCSISSKIDHLLNKSYEALDNKLSMFELDKLKDLISDSFDMASLTNIFTCSNDLVHILGVRTFNKLETAVQLAVHLISSYRQWFQNLDDKSLKDVITLLIKRSLLYALAGDSTGESQRAFIQTINTYFGHDSQELSDYSTIVIANDKLSFSSFCSEIPSVSLEAHEVMRPDIVIPTIDTIKHEKIFYDLLNSKRGIILCGPPGSGKTMIMNNALRNSSLYDVVGINFSKDTTTEHILSALHRHTNYVTTSKGLTLLPKSDIKNLVLFCDEINLPKLDKYGSQNVVLFLRQLMEKQGFWKTPENKWVTIERIHIVGACNPPTDPGRIPMSERFTRHAAILYLGYPSGKSLSQIYEIYYKAIFKLVPEFRSYTEPFARASVHLYNECKARYSTGLQSHYLFSPRELTRLVRGVYTAINTGPRQTLRSLIRLWAYEAWRIFADRLVGVKEKNSFEQLLYETVDKYLPNQDLGNISSTSLLFSGLLSLDFKEVNKTDLVNFIEERFKTFCDEELEVPMVIHESMVDHILRIDRALKQVQGHMMLIGASRTGKTILTRFVAWLNGLKIVQPKIHRHSNLSDFDMILKKAISDCSLKESRTCLIIDESNILETAFLERMNTLLANADIPDLFQGEEYDKLLNNLRNKTRSLGLLLDTEQELYDWFVGEIAKNLHVVFTICDPTNNKSSAMISSPALFNRCIINWMGDWDTKTMSQVANNMVDVIPMEFTDFIVPEVNKELVFTEPIQTIRDAVVNILIHFDRNFYQKMKVGVNPRSPGYFIDGLRALVKLVTAKYQDLQENQRFVNVGLEKLNESVLKVNELNKTLSKKSTELTEKEKEARSTLDKMLMEQNESERKQEATEEIKKILKVQEEDIRKRKEVVMKSIQDIEPTILEAQRGVKNIKKQQLTEIRSMVNPPSGVKIVMEAVCAILGYQFSNWRDIQQFIRKDDFIHNIVHYDTTLHMKPQIRKYMEEEFLSDPNFTYETINRASKACGPLYQWVNAQINFSKVLENVDPLRQEMKRIEFESLKTKANLLAAEEMTQDLEASIEVSKRKYSLLIRDVEAIKTEMSNVQANLDRSISLVKSLTFEKERWLNTTKQFSKTSQELIGNCIISSIYETYFGHLNERERADMLVILKRLLGKFAVKYDVNYRFIDYLVTLDEKMKWLECGLDKNDYFLENMSIVMNSQDAVPFLLDPSSHMITVISNYYGNKTVLLSFLEEGFVKRLENAIRFGSVVIIQDGEFFDPIISRLISREFNHAGNRVTVEIGDHEVDVSGDFKLFIHSCDPSGDIPIFLRSRVRLVHFVTNKESIETRIFDITLTEENAEMQRKREDLIKLNTEYKLKLKNLEKRLLEELNNSQGNMLENDELMVTLNNLKKEAMNIEKKLSESEEFFPQFDNLVEEYSIIGKHSVKIFSMLEKFGQFHWFYGISIGQFLSCFKRVFIKKSRETRAARTRVDEILWLLYQEVYCQFSTALDKKFKMIMAMTMFCLYKFDIESEQYKEAVLTMIGVLSESSDGVPKLTVDTNNDLRYLWDYVTTKSYISALNWFKNEFFVDEWNIADVVANSENNYFTMASERDVDGTFKLIELAKASKESLKIIPLGSIENLNYAQEEISKSKIEGGWILLQNIQMSLSWVKTYLHKHVEETKAAEEHEKFKMFMTCHLTGDKLPAPLLQRTDRFVYEDIPGILDTVKDLWGSQFFTGKISGVWSVYCTFLLSWFHALITARTRLVPHGFSKKYYFNDCDFQFASVYLENVLATNSTNNIPWAQVRDHIATIVYGGKIDEEKDLEVVAKLCAHVFCGSDNLQIVPGVRIPQPLLQQSEEEERARLTAILSNTIEPADSLSSWLQLPRESILNYERLQAKEVASSTEQLLQEM.

Residues 1-1757 (MCKNEARLAN…FISQSGYLLQ (1757 aa)) are stem. Coiled coils occupy residues 154–175 (VETI…QQLH), 486–508 (KLEQ…LQNT), 542–566 (KVLE…TGLE), 932–959 (VIKL…YVKE), 1042–1063 (YERD…VEDM), and 1681–1705 (KGLL…LVEY). AAA stretches follow at residues 1758 to 1979 (YKFE…VLRN), 2036 to 2273 (QCLK…NDLV), 2379 to 2628 (SLEA…LVRG), and 2722 to 2984 (TFCD…KVGV). Residues 1796 to 1803 (GPAGTGKT), 2074 to 2081 (GKAGCGKT), 2418 to 2425 (GPPGSGKT), and 2760 to 2767 (GASRTGKT) contribute to the ATP site. 3 coiled-coil regions span residues 2993–3092 (IDGL…KRKE), 3242–3300 (KTKA…KSLT), and 3532–3608 (ITLT…EEFF). The stalk stretch occupies residues 2993–3300 (IDGLRALVKL…RSISLVKSLT (308 aa)). AAA stretches follow at residues 3370–3599 (LVTL…NIEK) and 3760–3970 (LNWF…YLEN).

It belongs to the dynein heavy chain family. The dynein complex consists of at least two heavy chains and a number of intermediate and light chains. Interacts with DYN3.

It is found in the cytoplasm. It localises to the cytoskeleton. Functionally, cytoplasmic dynein acts as a motor for the intracellular retrograde motility of vesicles and organelles along microtubules. Dynein has ATPase activity; the force-producing power stroke is thought to occur on release of ADP. Required to maintain uniform nuclear distribution in hyphae. May play an important role in the proper orientation of the mitotic spindle into the budding daughter cell yeast. Probably required for normal progression of the cell cycle. This chain is Dynein heavy chain, cytoplasmic (DYN1), found in Saccharomyces cerevisiae (strain ATCC 204508 / S288c) (Baker's yeast).